The sequence spans 139 residues: MNLNLRVLTPNRVVWDSPVNEIILSTNSGKIGILPNHASLVTAVDIAVMQIRINSQWSTIVLMGGFAKIDNNELLLLVYDAEKGVDIDPQEAQETFNKAKTNLNKAEGKRQKIEADLAVKKARTRLEAINVLTPTSISN.

It belongs to the ATPase epsilon chain family. As to quaternary structure, F-type ATPases have 2 components, CF(1) - the catalytic core - and CF(0) - the membrane proton channel. CF(1) has five subunits: alpha(3), beta(3), gamma(1), delta(1), epsilon(1). CF(0) has three main subunits: a, b and c.

Its subcellular location is the plastid. The protein resides in the chloroplast thylakoid membrane. Functionally, produces ATP from ADP in the presence of a proton gradient across the membrane. The protein is ATP synthase epsilon chain, chloroplastic of Welwitschia mirabilis (Tree tumbo).